Consider the following 214-residue polypeptide: MRPPALTPRLLLRAYALGIFPMAESRDDPEIHWIDPRHRGIFPLDEFHISRSLARRIRRMDWRVGVNEDFAATVEACADREETWINPTIFRLYVELHALGHAHSLEVREGETLVGGVYGVTLGRAFFGESMFSRRTDASKVALAFLIDRLRAGGFTLFDTQFLTPHLASLGAIEIRRSDYHQRLTEALAGNASFTPEGYWADPASVVQRNSQTS.

The protein belongs to the L/F-transferase family.

Its subcellular location is the cytoplasm. The enzyme catalyses N-terminal L-lysyl-[protein] + L-leucyl-tRNA(Leu) = N-terminal L-leucyl-L-lysyl-[protein] + tRNA(Leu) + H(+). It carries out the reaction N-terminal L-arginyl-[protein] + L-leucyl-tRNA(Leu) = N-terminal L-leucyl-L-arginyl-[protein] + tRNA(Leu) + H(+). It catalyses the reaction L-phenylalanyl-tRNA(Phe) + an N-terminal L-alpha-aminoacyl-[protein] = an N-terminal L-phenylalanyl-L-alpha-aminoacyl-[protein] + tRNA(Phe). In terms of biological role, functions in the N-end rule pathway of protein degradation where it conjugates Leu, Phe and, less efficiently, Met from aminoacyl-tRNAs to the N-termini of proteins containing an N-terminal arginine or lysine. This Cereibacter sphaeroides (strain KD131 / KCTC 12085) (Rhodobacter sphaeroides) protein is Leucyl/phenylalanyl-tRNA--protein transferase.